The sequence spans 22 residues: Mu-conotoxin CnIIIC (22 aa).

Q1 is modified (pyrrolidone carboxylic acid; partial). 3 cysteine pairs are disulfide-bonded: C3–C15, C4–C21, and C10–C22. C22 carries the cysteine amide modification.

It belongs to the conotoxin M superfamily. In terms of tissue distribution, expressed by the venom duct.

The protein resides in the secreted. Functionally, mu-conotoxins block voltage-gated sodium channels (Nav). This synthetic toxin blocks both voltage-gated sodium channels and nicotinic acetylcholine receptor (nAChR). Inhibits the skeletal muscle rNav1.4/SCN4A (IC(50)=1.3 nM) and the brain rNav1.2/SCN2A in a long-lasting manner. A low inhibition is also observed on neuronal mNav1.6/SCN8A and mNav1.7/SCN9A. Modestly blocks nAChR alpha-3/beta-2 subtype (IC(50)=450 nM) (partially reversible) and, to a lesser extent, alpha-7 and alpha-4/beta-2 subtypes (reversible). In vitro, decreases twitch tension in mouse hemidiaphragms (IC(50)=150 nM), and displays a high blocking effect in mouse extensor digitorum longus muscles (IC(50)=46 nM). This is Mu-conotoxin CnIIIC from Conus consors (Singed cone).